Here is a 548-residue protein sequence, read N- to C-terminus: Chaperonin GroEL (548 aa).

Residues 30–33 (TLGP), K51, 87–91 (DGTTT), G415, and D496 each bind ATP. Residues 527 to 548 (SDKEDAMPPMRGGMGGMGGMDF) are disordered. Over residues 538 to 548 (GGMGGMGGMDF) the composition is skewed to gly residues.

This sequence belongs to the chaperonin (HSP60) family. Forms a cylinder of 14 subunits composed of two heptameric rings stacked back-to-back. Interacts with the co-chaperonin GroES.

The protein resides in the cytoplasm. It catalyses the reaction ATP + H2O + a folded polypeptide = ADP + phosphate + an unfolded polypeptide.. Functionally, together with its co-chaperonin GroES, plays an essential role in assisting protein folding. The GroEL-GroES system forms a nano-cage that allows encapsulation of the non-native substrate proteins and provides a physical environment optimized to promote and accelerate protein folding. This is Chaperonin GroEL from Rickettsia akari (strain Hartford).